A 70-amino-acid chain; its full sequence is Large ribosomal subunit protein eL24 (70 aa).

Positions 7, 10, 33, and 37 each coordinate Zn(2+). The segment at 7 to 37 (CSFCGYEIEPGKGKMVVEKDGTVLYFCSSKC) adopts a C4-type zinc-finger fold.

The protein belongs to the eukaryotic ribosomal protein eL24 family. As to quaternary structure, part of the 50S ribosomal subunit. Forms a cluster with proteins L3 and L14. The cofactor is Zn(2+).

In terms of biological role, binds to the 23S rRNA. This is Large ribosomal subunit protein eL24 from Methanocaldococcus jannaschii (strain ATCC 43067 / DSM 2661 / JAL-1 / JCM 10045 / NBRC 100440) (Methanococcus jannaschii).